Here is a 106-residue protein sequence, read N- to C-terminus: Toxin-like structure LSTX-D6 (106 aa).

The signal sequence occupies residues 1 to 20 (MMKVLVVAALLVTLISYSSS). Residues 21 to 41 (EGIDDLEADELLSLMANEQTR) constitute a propeptide that is removed on maturation. 4 disulfides stabilise this stretch: Cys45–Cys60, Cys52–Cys69, Cys59–Cys85, and Cys71–Cys83.

Belongs to the neurotoxin 19 (CSTX) family. 02 (D7) subfamily. As to expression, expressed by the venom gland.

Its subcellular location is the secreted. The sequence is that of Toxin-like structure LSTX-D6 from Lycosa singoriensis (Wolf spider).